The primary structure comprises 462 residues: Glycoprotein endo-alpha-1,2-mannosidase (462 aa).

Residues 1 to 8 (MAKFRRRT) lie on the Cytoplasmic side of the membrane. A helical; Signal-anchor for type II membrane protein membrane pass occupies residues 9–29 (CIILALFILFIFSLMMGLKML). At 30–462 (RPNTATFGAP…YALDRQLPVS (433 aa)) the chain is on the lumenal side. The interval 60 to 462 (DFQKSDRINS…YALDRQLPVS (403 aa)) is catalytic.

The protein belongs to the glycosyl hydrolase 99 family. In terms of processing, undergoes proteolytic cleavage in the C-terminal region. Highly expressed in the liver and kidney. Expressed at lower levels in muscle, pancreas, heart, placenta, lung and brain.

It localises to the golgi apparatus membrane. It carries out the reaction N-{alpha-Glc-(1-&gt;3)-alpha-Man-(1-&gt;2)-alpha-Man-(1-&gt;2)-alpha-Man-(1-&gt;3)-[alpha-Man-(1-&gt;2)-alpha-Man-(1-&gt;3)-[alpha-Man-(1-&gt;2)-alpha-Man-(1-&gt;6)]-alpha-Man-(1-&gt;6)]-beta-Man-(1-&gt;4)-beta-GlcNAc-(1-&gt;4)-beta-GlcNAc}-L-asparaginyl-[protein] + H2O = alpha-D-glucosyl-(1-&gt;3)-D-mannopyranose + N(4)-{alpha-D-Man-(1-&gt;2)-alpha-D-Man-(1-&gt;3)-[alpha-D-Man-(1-&gt;2)-alpha-D-Man-(1-&gt;3)-[alpha-D-Man-(1-&gt;2)-alpha-D-Man-(1-&gt;6)]-alpha-D-Man-(1-&gt;6)]-beta-D-Man-(1-&gt;4)-beta-D-GlaNAc-(1-&gt;4)-beta-D-GlcNAc}-L-asparaginyl-[protein] (N-glucan mannose isomer 8A1,2,3B1,2). In Homo sapiens (Human), this protein is Glycoprotein endo-alpha-1,2-mannosidase (MANEA).